The primary structure comprises 233 residues: Protein-methionine-sulfoxide reductase heme-binding subunit MsrQ (233 aa).

The next 6 membrane-spanning stretches (helical) occupy residues 13-33 (IKAALFLLTLLPALHYAHGLW), 44-64 (ALTRGMGIWTLNFLFLTLCVS), 81-101 (MLGLTAFAYGCLHLLTYLWLD), 117-137 (PFITVGATAFLLMLPLALTSS), 151-171 (SLHRAVYAVAILGVVHYLWLV), and 174-194 (VALLDPIIYALVLAILLGWRV). Residues 50-164 (GIWTLNFLFL…AVYAVAILGV (115 aa)) form the Ferric oxidoreductase domain.

This sequence belongs to the MsrQ family. In terms of assembly, heterodimer of a catalytic subunit (MsrP) and a heme-binding subunit (MsrQ).

Its subcellular location is the cell inner membrane. In terms of biological role, part of the MsrPQ system that repairs oxidized periplasmic proteins containing methionine sulfoxide residues (Met-O), using respiratory chain electrons. Thus protects these proteins from oxidative-stress damage caused by reactive species of oxygen and chlorine generated by the host defense mechanisms. MsrPQ is essential for the maintenance of envelope integrity under bleach stress, rescuing a wide series of structurally unrelated periplasmic proteins from methionine oxidation. MsrQ provides electrons for reduction to the reductase catalytic subunit MsrP, using the quinone pool of the respiratory chain. Probably involved in protection against reactive chlorine species (RCS) generated by chlorite and hypochlorite. This chain is Protein-methionine-sulfoxide reductase heme-binding subunit MsrQ, found in Azospira oryzae (strain ATCC BAA-33 / DSM 13638 / PS) (Dechlorosoma suillum).